The sequence spans 112 residues: Integration host factor subunit alpha (112 aa).

Belongs to the bacterial histone-like protein family. Heterodimer of an alpha and a beta chain.

Its function is as follows. This protein is one of the two subunits of integration host factor, a specific DNA-binding protein that functions in genetic recombination as well as in transcriptional and translational control. This Allorhizobium ampelinum (strain ATCC BAA-846 / DSM 112012 / S4) (Agrobacterium vitis (strain S4)) protein is Integration host factor subunit alpha.